The following is a 617-amino-acid chain: V-type proton ATPase catalytic subunit A (617 aa).

Thr-136 is modified (phosphothreonine). 250–257 (GAFGCGKT) is a binding site for ATP. Phosphoserine; by AMPK is present on Ser-384.

The protein belongs to the ATPase alpha/beta chains family. As to quaternary structure, V-ATPase is a heteromultimeric enzyme made up of two complexes: the ATP-hydrolytic V1 complex and the proton translocation V0 complex. The V1 complex consists of three catalytic AB heterodimers that form a heterohexamer, three peripheral stalks each consisting of EG heterodimers, one central rotor including subunits D and F, and the regulatory subunits C and H. The proton translocation complex V0 consists of the proton transport subunit a, a ring of proteolipid subunits c9c'', rotary subunit d, subunits e and f, and the accessory subunits ATP6AP1/Ac45 and ATP6AP2/PRR. Interacts with the V0 complex V-ATPase subunit a4 ATP6V0A4. Interacts with WFS1. Interacts with alpha-crystallin B chain/CRYAB and with MTOR, forming a ternary complex. Phosphorylation at Ser-384 by AMPK down-regulates its enzyme activity.

The protein resides in the cytoplasm. It is found in the cytosol. Its subcellular location is the cytoplasmic vesicle. The protein localises to the secretory vesicle. It localises to the clathrin-coated vesicle membrane. The protein resides in the lysosome. The catalysed reaction is ATP + H2O + 4 H(+)(in) = ADP + phosphate + 5 H(+)(out). With respect to regulation, ATP hydrolysis occurs at the interface between the nucleotide-binding domains of subunits A and B. ATP hydrolysis triggers a conformational change in the subunits D and F, which induces a shift of subunit d. The c-ring is subsequently rotated and results in a continuous proton translocation across the membrane. Functionally, catalytic subunit of the V1 complex of vacuolar(H+)-ATPase (V-ATPase), a multisubunit enzyme composed of a peripheral complex (V1) that hydrolyzes ATP and a membrane integral complex (V0) that translocates protons. V-ATPase is responsible for acidifying and maintaining the pH of intracellular compartments and in some cell types, is targeted to the plasma membrane, where it is responsible for acidifying the extracellular environment. In aerobic conditions, involved in intracellular iron homeostasis, thus triggering the activity of Fe(2+) prolyl hydroxylase (PHD) enzymes, and leading to HIF1A hydroxylation and subsequent proteasomal degradation. May play a role in neurite development and synaptic connectivity. This chain is V-type proton ATPase catalytic subunit A (ATP6V1A), found in Pongo abelii (Sumatran orangutan).